Reading from the N-terminus, the 236-residue chain is 2,3,4,5-tetrahydropyridine-2,6-dicarboxylate N-acetyltransferase (236 aa).

This sequence belongs to the transferase hexapeptide repeat family. DapH subfamily.

It catalyses the reaction (S)-2,3,4,5-tetrahydrodipicolinate + acetyl-CoA + H2O = L-2-acetamido-6-oxoheptanedioate + CoA. It participates in amino-acid biosynthesis; L-lysine biosynthesis via DAP pathway; LL-2,6-diaminopimelate from (S)-tetrahydrodipicolinate (acetylase route): step 1/3. In terms of biological role, catalyzes the transfer of an acetyl group from acetyl-CoA to tetrahydrodipicolinate. This Listeria innocua serovar 6a (strain ATCC BAA-680 / CLIP 11262) protein is 2,3,4,5-tetrahydropyridine-2,6-dicarboxylate N-acetyltransferase.